A 191-amino-acid chain; its full sequence is Cell division protein SepF (191 aa).

The disordered stretch occupies residues 21 to 96; sequence EVEEPAVASV…NQQPAQEKTT (76 aa). The segment covering 25–56 has biased composition (low complexity); sequence PAVASVKRQQDAAQPASQQQKAQSHQYHQSAS. Composition is skewed to polar residues over residues 57–69 and 86–95; these read RPSQ…GQNR and HNQQPAQEKT.

This sequence belongs to the SepF family. In terms of assembly, homodimer. Interacts with FtsZ.

Its subcellular location is the cytoplasm. In terms of biological role, cell division protein that is part of the divisome complex and is recruited early to the Z-ring. Probably stimulates Z-ring formation, perhaps through the cross-linking of FtsZ protofilaments. Its function overlaps with FtsA. In Streptococcus mutans serotype c (strain ATCC 700610 / UA159), this protein is Cell division protein SepF.